Here is a 210-residue protein sequence, read N- to C-terminus: Uracil phosphoribosyltransferase (210 aa).

5-phospho-alpha-D-ribose 1-diphosphate-binding positions include arginine 78, arginine 103, and 130–138; that span reads DPMLATGGT. Uracil-binding positions include isoleucine 193 and 198–200; that span reads GDA. Aspartate 199 contacts 5-phospho-alpha-D-ribose 1-diphosphate.

It belongs to the UPRTase family. Requires Mg(2+) as cofactor.

The enzyme catalyses UMP + diphosphate = 5-phospho-alpha-D-ribose 1-diphosphate + uracil. It functions in the pathway pyrimidine metabolism; UMP biosynthesis via salvage pathway; UMP from uracil: step 1/1. With respect to regulation, allosterically activated by GTP. In terms of biological role, catalyzes the conversion of uracil and 5-phospho-alpha-D-ribose 1-diphosphate (PRPP) to UMP and diphosphate. The polypeptide is Uracil phosphoribosyltransferase (Xanthomonas axonopodis pv. citri (strain 306)).